Consider the following 259-residue polypeptide: Imidazole glycerol phosphate synthase subunit HisF (259 aa).

Residues aspartate 11 and aspartate 130 contribute to the active site.

This sequence belongs to the HisA/HisF family. Heterodimer of HisH and HisF.

Its subcellular location is the cytoplasm. It carries out the reaction 5-[(5-phospho-1-deoxy-D-ribulos-1-ylimino)methylamino]-1-(5-phospho-beta-D-ribosyl)imidazole-4-carboxamide + L-glutamine = D-erythro-1-(imidazol-4-yl)glycerol 3-phosphate + 5-amino-1-(5-phospho-beta-D-ribosyl)imidazole-4-carboxamide + L-glutamate + H(+). Its pathway is amino-acid biosynthesis; L-histidine biosynthesis; L-histidine from 5-phospho-alpha-D-ribose 1-diphosphate: step 5/9. In terms of biological role, IGPS catalyzes the conversion of PRFAR and glutamine to IGP, AICAR and glutamate. The HisF subunit catalyzes the cyclization activity that produces IGP and AICAR from PRFAR using the ammonia provided by the HisH subunit. The protein is Imidazole glycerol phosphate synthase subunit HisF of Shewanella amazonensis (strain ATCC BAA-1098 / SB2B).